The primary structure comprises 103 residues: Iron-sulfur cluster assembly protein CyaY (103 aa).

The protein belongs to the frataxin family.

Functionally, involved in iron-sulfur (Fe-S) cluster assembly. May act as a regulator of Fe-S biogenesis. The chain is Iron-sulfur cluster assembly protein CyaY from Rickettsia peacockii (strain Rustic).